We begin with the raw amino-acid sequence, 318 residues long: MQNKNNYNWLKEWVIRSFLLLTLLTWPSVSNAYPIFAQQGYENPREATGRIVCANCHLAKKPVDIEVPQSVLPDTVFEAIVKIPYDMQVKQVLANGKKGGLNVGAVPILPQGFELAPSDRIPTEIKEKIGNLSFQNYSPDKKNIIIVGPVPGKKYSEIVFPILSPDPASNKESNFLKYPIYVGGNRGRGQIYPDGSRSNNTVYNASATGKVIKIFRKEKKGGYEITIEKTSDGRQVVDIVPPGPELIISEGEFLKVDQPLTNNPNVGGFGQGDAEIVLQDPLRIQGLLLFFASVVLAQIFLVLKKKQFEKVQLAEMNF.

The N-terminal stretch at 1-32 is a signal peptide; sequence MQNKNNYNWLKEWVIRSFLLLTLLTWPSVSNA. Heme contacts are provided by tyrosine 33, cysteine 53, cysteine 56, and histidine 57. The helical transmembrane segment at 284–304 threads the bilayer; it reads IQGLLLFFASVVLAQIFLVLK.

Belongs to the cytochrome f family. In terms of assembly, the 4 large subunits of the cytochrome b6-f complex are cytochrome b6, subunit IV (17 kDa polypeptide, petD), cytochrome f and the Rieske protein, while the 4 small subunits are PetG, PetL, PetM and PetN. The complex functions as a dimer. Heme serves as cofactor.

The protein localises to the plastid. The protein resides in the chloroplast thylakoid membrane. Functionally, component of the cytochrome b6-f complex, which mediates electron transfer between photosystem II (PSII) and photosystem I (PSI), cyclic electron flow around PSI, and state transitions. The protein is Cytochrome f of Angiopteris evecta (Mule's foot fern).